Here is a 432-residue protein sequence, read N- to C-terminus: Glutamyl-tRNA reductase (432 aa).

Residues 49-52 (TCNR), serine 109, 114-116 (EGQ), and glutamine 120 contribute to the substrate site. Cysteine 50 functions as the Nucleophile in the catalytic mechanism. 198 to 203 (GAGRMS) serves as a coordination point for NADP(+).

This sequence belongs to the glutamyl-tRNA reductase family. In terms of assembly, homodimer.

The catalysed reaction is (S)-4-amino-5-oxopentanoate + tRNA(Glu) + NADP(+) = L-glutamyl-tRNA(Glu) + NADPH + H(+). It functions in the pathway porphyrin-containing compound metabolism; protoporphyrin-IX biosynthesis; 5-aminolevulinate from L-glutamyl-tRNA(Glu): step 1/2. Its pathway is porphyrin-containing compound metabolism; chlorophyll biosynthesis. Catalyzes the NADPH-dependent reduction of glutamyl-tRNA(Glu) to glutamate 1-semialdehyde (GSA). The protein is Glutamyl-tRNA reductase of Parasynechococcus marenigrum (strain WH8102).